The primary structure comprises 292 residues: uncharacterized protein (292 aa).

The region spanning 1–58 is the HTH lysR-type domain; it reads MEWEQLEYFQTLARMQHVTKAAKSLSITQPALSRSIARLENHLGVPLFDRQGRSISLN. Positions 18 to 37 form a DNA-binding region, H-T-H motif; sequence VTKAAKSLSITQPALSRSIA.

This sequence belongs to the LysR transcriptional regulatory family.

This is an uncharacterized protein from Bacillus subtilis (strain 168).